We begin with the raw amino-acid sequence, 586 residues long: Kelch-like protein 7 (586 aa).

One can recognise a BTB domain in the interval 44 to 111 (CDVILMVQER…AYTARISVNS (68 aa)). Residues 146-248 (CLGISVLAEC…SKNFLSKTVQ (103 aa)) form the BACK domain. Kelch repeat units lie at residues 294–336 (RIAL…FWDN), 337–382 (VVYI…AAEG), 383–430 (KIYT…EANG), 431–481 (LIYV…FVKD), 483–528 (IFAV…AVGS), and 530–575 (VYVL…CVVD).

Homodimer. Component of the BCR(KLHL7) E3 ubiquitin ligase complex.

The protein resides in the nucleus. The protein localises to the cytoplasm. It participates in protein modification; protein ubiquitination. Functionally, substrate-specific adapter of a BCR (BTB-CUL3-RBX1) E3 ubiquitin ligase complex. The BCR(KLHL7) complex acts by mediating ubiquitination and subsequent degradation of substrate proteins. Probably mediates 'Lys-48'-linked ubiquitination. The protein is Kelch-like protein 7 (KLHL7) of Gallus gallus (Chicken).